Consider the following 235-residue polypeptide: Ribonuclease P protein component 3 (235 aa).

It belongs to the eukaryotic/archaeal RNase P protein component 3 family. Consists of a catalytic RNA component and at least 4-5 protein subunits.

It localises to the cytoplasm. It carries out the reaction Endonucleolytic cleavage of RNA, removing 5'-extranucleotides from tRNA precursor.. Functionally, part of ribonuclease P, a protein complex that generates mature tRNA molecules by cleaving their 5'-ends. This Haloarcula marismortui (strain ATCC 43049 / DSM 3752 / JCM 8966 / VKM B-1809) (Halobacterium marismortui) protein is Ribonuclease P protein component 3.